A 182-amino-acid polypeptide reads, in one-letter code: MFKYIGDIVKGTGTQLRSLVMIFGHGFRKRDTLQYPEEPVYLAPRYRGRIVLTRDPDGEERCVACNLCAVACPVGCISLQKAETEDGRWYPDFFRINFSRCIFCGLCEEACPTTAIQLTPDFEMAEFKRQDLVYEKEDLLISGPGKNPDYNFYRVAGMAIAGKPKGAAQNEAEPINVKSLLP.

2 consecutive 4Fe-4S ferredoxin-type domains span residues 52–82 (LTRDPDGEERCVACNLCAVACPVGCISLQKA) and 92–121 (DFFRINFSRCIFCGLCEEACPTTAIQLTPD). [4Fe-4S] cluster-binding residues include cysteine 62, cysteine 65, cysteine 68, cysteine 72, cysteine 101, cysteine 104, cysteine 107, and cysteine 111.

The protein belongs to the complex I 23 kDa subunit family. As to quaternary structure, NDH-1 is composed of 13 different subunits. Subunits NuoA, H, J, K, L, M, N constitute the membrane sector of the complex. It depends on [4Fe-4S] cluster as a cofactor.

The protein resides in the cell inner membrane. It catalyses the reaction a quinone + NADH + 5 H(+)(in) = a quinol + NAD(+) + 4 H(+)(out). Functionally, NDH-1 shuttles electrons from NADH, via FMN and iron-sulfur (Fe-S) centers, to quinones in the respiratory chain. The immediate electron acceptor for the enzyme in this species is believed to be ubiquinone. Couples the redox reaction to proton translocation (for every two electrons transferred, four hydrogen ions are translocated across the cytoplasmic membrane), and thus conserves the redox energy in a proton gradient. Required for plants roots colonization. In Pseudomonas fluorescens, this protein is NADH-quinone oxidoreductase subunit I (nuoI).